A 265-amino-acid chain; its full sequence is 3-methyl-2-oxobutanoate hydroxymethyltransferase (265 aa).

Residues Asp43 and Asp82 each contribute to the Mg(2+) site. Residues 43-44 (DS), Asp82, and Lys111 each bind 3-methyl-2-oxobutanoate. Position 113 (Glu113) interacts with Mg(2+). Residue Glu180 is the Proton acceptor of the active site.

Belongs to the PanB family. As to quaternary structure, homodecamer; pentamer of dimers. The cofactor is Mg(2+).

The protein resides in the cytoplasm. It catalyses the reaction 3-methyl-2-oxobutanoate + (6R)-5,10-methylene-5,6,7,8-tetrahydrofolate + H2O = 2-dehydropantoate + (6S)-5,6,7,8-tetrahydrofolate. It participates in cofactor biosynthesis; (R)-pantothenate biosynthesis; (R)-pantoate from 3-methyl-2-oxobutanoate: step 1/2. In terms of biological role, catalyzes the reversible reaction in which hydroxymethyl group from 5,10-methylenetetrahydrofolate is transferred onto alpha-ketoisovalerate to form ketopantoate. The polypeptide is 3-methyl-2-oxobutanoate hydroxymethyltransferase (Francisella tularensis subsp. holarctica (strain OSU18)).